A 296-amino-acid polypeptide reads, in one-letter code: Decaprenyl diphosphate synthase (296 aa).

The interval 1 to 58 (MVRNERTLKSTDFPQLPPAPDDYPTFPDKSTWPVVFPMLPPSPDGGPRRPPQHTSKAV) is disordered. Residue Asp76 is part of the active site. Asp76 lines the Mg(2+) pocket. Substrate is bound by residues 77-80 (GNGR), Trp81, Arg89, His93, and 121-123 (STE). Asn124 serves as the catalytic Proton acceptor. Substrate contacts are provided by residues Trp125, Arg127, Arg244, and 250 to 252 (RSS). Residue Glu263 participates in Mg(2+) binding.

Belongs to the UPP synthase family. In terms of assembly, homodimer. The cofactor is Mg(2+).

It is found in the cell membrane. It catalyses the reaction (2Z,6E)-farnesyl diphosphate + 7 isopentenyl diphosphate = (2Z,6Z,10Z,14Z,18Z,22Z,26Z,30Z,34E)-decaprenyl diphosphate + 7 diphosphate. It carries out the reaction n isopentenyl diphosphate + (2E,6E)-farnesyl diphosphate = a di-trans,poly-cis-polyprenyl diphosphate + n diphosphate. Functionally, catalyzes the sequential condensation of isopentenyl diphosphate (IPP) in the cis configuration with (2Z,6E)-farnesyl diphosphate (Z-FPP or EZ-FPP) generating the 50 carbon product trans,polycis-decaprenyl diphosphate. When (2E,6E)-farnesyl diphosphate (E-FPP or EE-FPP) is used in vitro, both primary products decaprenyl diphosphate and (2E,6E,10E)-geranylgeranyl diphosphate (EEE-GGPP) are synthesized. M.tuberculosis does not synthesize (2E,6E,10Z)-geranylgeranyl diphosphate (EEZ-GGPP) and heptaprenyl diphosphate. Can also accept many different allylic substrates, including E-geranyl diphosphate (E-GPP), neryl diphosphate (NPP), and all-trans-geranyl-geranyl diphosphate. This is Decaprenyl diphosphate synthase (uppS) from Mycobacterium leprae (strain TN).